The chain runs to 118 residues: Ribonuclease P protein component (118 aa).

It belongs to the RnpA family. As to quaternary structure, consists of a catalytic RNA component (M1 or rnpB) and a protein subunit.

It catalyses the reaction Endonucleolytic cleavage of RNA, removing 5'-extranucleotides from tRNA precursor.. Functionally, RNaseP catalyzes the removal of the 5'-leader sequence from pre-tRNA to produce the mature 5'-terminus. It can also cleave other RNA substrates such as 4.5S RNA. The protein component plays an auxiliary but essential role in vivo by binding to the 5'-leader sequence and broadening the substrate specificity of the ribozyme. The sequence is that of Ribonuclease P protein component from Levilactobacillus brevis (strain ATCC 367 / BCRC 12310 / CIP 105137 / JCM 1170 / LMG 11437 / NCIMB 947 / NCTC 947) (Lactobacillus brevis).